Consider the following 474-residue polypeptide: Semenogelin-2 (474 aa).

The signal sequence occupies residues 1-23 (MKSIILFVLSLLLILEKQAAVMG). Disordered regions lie at residues 24 to 62 (QKGGSKGQLPSGSSQFPHGQKGQHYFGQKDQQHTKSKGS), 132 to 158 (GGQAHRGTQNPSQDQGNSPSGKGLSSQ), 173 to 194 (KEQASASGAQKGRTQGGSQSSY), 226 to 247 (VREEHSSKLQTSLHPAHQDRLQ), and 272 to 474 (NLNQ…SSTE). 3 stretches are compositionally biased toward polar residues: residues 31–40 (QLPSGSSQFP), 137–158 (RGTQNPSQDQGNSPSGKGLSSQ), and 174–194 (EQASASGAQKGRTQGGSQSSY). The span at 292–310 (RTEERQLNHGEKSVQKDVS) shows a compositional bias: basic and acidic residues. A compositionally biased stretch (polar residues) spans 325 to 334 (KSQNQVTIHS). The segment covering 335–346 (QDQEHGHKENKM) has biased composition (basic and acidic residues). Positions 372–397 (GSISIQTEEQIHGKSQNQVRIPSQAQ) are enriched in polar residues. Over residues 399–426 (YGHKENKISYRSSSTEERRLNSGEKDVQ) the composition is skewed to basic and acidic residues. The segment covering 445 to 455 (KSQNQVTIPSQ) has biased composition (polar residues). Residues 456–465 (DQEHGHKENK) show a composition bias toward basic and acidic residues.

It belongs to the semenogelin family. In terms of assembly, interacts with SERPINA5.

It is found in the secreted. Participates in the formation of a gel matrix (sperm coagulum) entrapping the accessory gland secretions and ejaculated spermatozoa. This Gorilla gorilla gorilla (Western lowland gorilla) protein is Semenogelin-2 (SEMG2).